Here is a 334-residue protein sequence, read N- to C-terminus: Thiamine thiazole synthase (334 aa).

Substrate-binding positions include C86, 107–108, G115, and V183; that span reads EA. C221 carries the 2,3-didehydroalanine (Cys) modification. Substrate-binding positions include D223, H238, M290, and 300–302; that span reads RMG.

This sequence belongs to the THI4 family. As to quaternary structure, homooctamer. Fe cation serves as cofactor. During the catalytic reaction, a sulfide is transferred from Cys-221 to a reaction intermediate, generating a dehydroalanine residue.

Its subcellular location is the cytoplasm. It is found in the nucleus. It carries out the reaction [ADP-thiazole synthase]-L-cysteine + glycine + NAD(+) = [ADP-thiazole synthase]-dehydroalanine + ADP-5-ethyl-4-methylthiazole-2-carboxylate + nicotinamide + 3 H2O + 2 H(+). In terms of biological role, involved in biosynthesis of the thiamine precursor thiazole. Catalyzes the conversion of NAD and glycine to adenosine diphosphate 5-(2-hydroxyethyl)-4-methylthiazole-2-carboxylic acid (ADT), an adenylated thiazole intermediate. The reaction includes an iron-dependent sulfide transfer from a conserved cysteine residue of the protein to a thiazole intermediate. The enzyme can only undergo a single turnover, which suggests it is a suicide enzyme. May have additional roles in adaptation to various stress conditions and in DNA damage tolerance. This Ajellomyces capsulatus (strain G186AR / H82 / ATCC MYA-2454 / RMSCC 2432) (Darling's disease fungus) protein is Thiamine thiazole synthase.